The chain runs to 260 residues: Protein phosphatase 1 regulatory subunit 35 (260 aa).

The tract at residues 1 to 100 (MMGFGASALE…PLLVAGAPGD (100 aa)) is disordered. Residues serine 46 and serine 53 each carry the phosphoserine modification. The segment covering 64-76 (RKGRRGGSRRGRQ) has biased composition (basic residues).

It belongs to the PPP1R35 family. As to quaternary structure, interacts with PPP1CA; this interaction mediates the PPP1CA phosphatase activity inhibition. Interacts with RTTN; this interaction allows the mutual recruitment to the centriole.

It is found in the cytoplasm. The protein resides in the cytoskeleton. Its subcellular location is the microtubule organizing center. The protein localises to the centrosome. It localises to the centriole. Functionally, during centriole duplication, plays a role in the centriole elongation by promoting the recruitment of the microtubule-binding elongation machinery through its interaction with TTTN, leading to the centriole to centrosome conversion. In addition may play a role in the primary cilia assembly. This is Protein phosphatase 1 regulatory subunit 35 from Mus musculus (Mouse).